The primary structure comprises 230 residues: 7-cyano-7-deazaguanine synthase (230 aa).

10-20 is an ATP binding site; it reads LSGGLDSATTA. Zn(2+)-binding residues include Cys191, Cys199, Cys202, and Cys205.

This sequence belongs to the QueC family. Zn(2+) serves as cofactor.

It carries out the reaction 7-carboxy-7-deazaguanine + NH4(+) + ATP = 7-cyano-7-deazaguanine + ADP + phosphate + H2O + H(+). The protein operates within purine metabolism; 7-cyano-7-deazaguanine biosynthesis. Catalyzes the ATP-dependent conversion of 7-carboxy-7-deazaguanine (CDG) to 7-cyano-7-deazaguanine (preQ(0)). This chain is 7-cyano-7-deazaguanine synthase, found in Gloeothece citriformis (strain PCC 7424) (Cyanothece sp. (strain PCC 7424)).